Here is a 308-residue protein sequence, read N- to C-terminus: Porphobilinogen deaminase (308 aa).

Position 241 is an S-(dipyrrolylmethanemethyl)cysteine (Cys241).

This sequence belongs to the HMBS family. In terms of assembly, monomer. It depends on dipyrromethane as a cofactor.

The catalysed reaction is 4 porphobilinogen + H2O = hydroxymethylbilane + 4 NH4(+). Its pathway is porphyrin-containing compound metabolism; protoporphyrin-IX biosynthesis; coproporphyrinogen-III from 5-aminolevulinate: step 2/4. In terms of biological role, tetrapolymerization of the monopyrrole PBG into the hydroxymethylbilane pre-uroporphyrinogen in several discrete steps. This Staphylococcus aureus (strain Mu50 / ATCC 700699) protein is Porphobilinogen deaminase.